Reading from the N-terminus, the 382-residue chain is 1-deoxy-D-xylulose 5-phosphate reductoisomerase (382 aa).

NADPH is bound by residues Thr10, Gly11, Ser12, Ile13, Gly36, Lys37, Asn38, and Asn121. Lys122 provides a ligand contact to 1-deoxy-D-xylulose 5-phosphate. Glu123 lines the NADPH pocket. Mn(2+) is bound at residue Asp147. Positions 148, 149, 173, and 196 each coordinate 1-deoxy-D-xylulose 5-phosphate. Glu149 contacts Mn(2+). Residue Gly202 coordinates NADPH. 4 residues coordinate 1-deoxy-D-xylulose 5-phosphate: Ser209, Asn214, Lys215, and Glu218. Glu218 provides a ligand contact to Mn(2+).

The protein belongs to the DXR family. It depends on Mg(2+) as a cofactor. The cofactor is Mn(2+).

It catalyses the reaction 2-C-methyl-D-erythritol 4-phosphate + NADP(+) = 1-deoxy-D-xylulose 5-phosphate + NADPH + H(+). It participates in isoprenoid biosynthesis; isopentenyl diphosphate biosynthesis via DXP pathway; isopentenyl diphosphate from 1-deoxy-D-xylulose 5-phosphate: step 1/6. Catalyzes the NADPH-dependent rearrangement and reduction of 1-deoxy-D-xylulose-5-phosphate (DXP) to 2-C-methyl-D-erythritol 4-phosphate (MEP). The sequence is that of 1-deoxy-D-xylulose 5-phosphate reductoisomerase from Halalkalibacterium halodurans (strain ATCC BAA-125 / DSM 18197 / FERM 7344 / JCM 9153 / C-125) (Bacillus halodurans).